A 177-amino-acid chain; its full sequence is MSRVGKYPVSVPSGVTVQITGPEVTVKGKLGESKLTLRDNVEVTLDGNLIWVKPKNETKHARMMWGTTRAHLNNMVKGVSDGFTVNLEINGVGYRAAVEGKSLKLQLGYSHDIEYPIPDDVTMKCEKPTAISISGRDKRQVGQIAAEIRAFRGPEPYKGKGIKYETETILRKEGKKK.

The protein belongs to the universal ribosomal protein uL6 family. Part of the 50S ribosomal subunit.

Functionally, this protein binds to the 23S rRNA, and is important in its secondary structure. It is located near the subunit interface in the base of the L7/L12 stalk, and near the tRNA binding site of the peptidyltransferase center. In Paramagnetospirillum magneticum (strain ATCC 700264 / AMB-1) (Magnetospirillum magneticum), this protein is Large ribosomal subunit protein uL6.